Consider the following 383-residue polypeptide: Lipid-A-disaccharide synthase (383 aa).

It belongs to the LpxB family.

It catalyses the reaction a lipid X + a UDP-2-N,3-O-bis[(3R)-3-hydroxyacyl]-alpha-D-glucosamine = a lipid A disaccharide + UDP + H(+). It participates in bacterial outer membrane biogenesis; LPS lipid A biosynthesis. Functionally, condensation of UDP-2,3-diacylglucosamine and 2,3-diacylglucosamine-1-phosphate to form lipid A disaccharide, a precursor of lipid A, a phosphorylated glycolipid that anchors the lipopolysaccharide to the outer membrane of the cell. The chain is Lipid-A-disaccharide synthase from Anaeromyxobacter sp. (strain K).